The primary structure comprises 405 residues: Potassium channel subfamily K member 13 (405 aa).

The Cytoplasmic portion of the chain corresponds to 1–19 (MAGRGCGCSPGHLNEDNAR). The helical transmembrane segment at 20–40 (FLLLAGLILLYLLGGAAVFSA) threads the bilayer. N-linked (GlcNAc...) asparagine glycans are attached at residues asparagine 59 and asparagine 65. The segment at residues 95 to 115 (WDFTGAFYFVGTVVSTIGFGM) is an intramembrane region (pore-forming). 3 residues coordinate K(+): threonine 110, isoleucine 111, and glycine 112. Residues 110-115 (TIGFGM) are selectivity filter 1. Residues 125–145 (IFLIFYGLIGCASTILFFNLF) traverse the membrane as a helical segment. The Cytoplasmic segment spans residues 146-193 (LERLITVIACVMRSCHQQQLRRRGAVTQDNMKAPEKGEADSLTGWKPS). The helical transmembrane segment at 194 to 214 (VYYVMLILCLASVAISCGASA) threads the bilayer. An intramembrane region (pore-forming) is located at residues 224-244 (YFDSVYFCFVAFSTIGFGDLV). K(+) contacts are provided by threonine 237, isoleucine 238, glycine 239, and phenylalanine 240. Residues 237-242 (TIGFGD) are selectivity filter 2. Residues 263 to 283 (FLILMGVCCIYSLFNVISILI) traverse the membrane as a helical segment. Residues 284–405 (KQTVNWILRK…NRLAETSGDR (122 aa)) are Cytoplasmic-facing.

Belongs to the two pore domain potassium channel (TC 1.A.1.8) family. In terms of assembly, homodimer. Heterodimer with KCNK12.

The protein resides in the cell membrane. The enzyme catalyses K(+)(in) = K(+)(out). K(+) channel that conducts outward rectifying tonic currents potentiated by purinergic signals. Homo- and heterodimerizes to form functional channels with distinct regulatory and gating properties. Contributes most of K(+) currents at the plasma membrane of resting microglia. Maintains a depolarized membrane potential required for proper ramified microglia morphology and phagocytosis, selectively mediating microglial pruning of presynaptic compartments at hippocampal excitatory synapses. Upon local release of ATP caused by neuronal injury or infection, it is potentiated by P2RY12 and P2RX7 receptor signaling and contributes to ATP-triggered K(+) efflux underlying microglial NLRP3 inflammasome assembly and IL1B release. The chain is Potassium channel subfamily K member 13 from Mus musculus (Mouse).